We begin with the raw amino-acid sequence, 875 residues long: Protein translocase subunit SecA (875 aa).

ATP is bound by residues Q87, 105–109, and D512; that span reads GEGKT. Zn(2+) contacts are provided by C860, C862, C871, and H872.

The protein belongs to the SecA family. As to quaternary structure, monomer and homodimer. Part of the essential Sec protein translocation apparatus which comprises SecA, SecYEG and auxiliary proteins SecDF-YajC and YidC. It depends on Zn(2+) as a cofactor.

Its subcellular location is the cell inner membrane. The protein localises to the cytoplasm. It carries out the reaction ATP + H2O + cellular proteinSide 1 = ADP + phosphate + cellular proteinSide 2.. Its function is as follows. Part of the Sec protein translocase complex. Interacts with the SecYEG preprotein conducting channel. Has a central role in coupling the hydrolysis of ATP to the transfer of proteins into and across the cell membrane, serving both as a receptor for the preprotein-SecB complex and as an ATP-driven molecular motor driving the stepwise translocation of polypeptide chains across the membrane. In Buchnera aphidicola subsp. Acyrthosiphon pisum (strain 5A), this protein is Protein translocase subunit SecA.